We begin with the raw amino-acid sequence, 142 residues long: Pro-vaccinia growth factor (142 aa).

Positions 1 to 18 (MSMKYLMLLFAAMIIRSF) are cleaved as a signal peptide. Topologically, residues 19–100 (ADSGNAIETT…SENPNTTTSY (82 aa)) are extracellular. A glycan (N-linked (GlcNAc...) asparagine; by host) is linked at asparagine 34. One can recognise an EGF-like domain in the interval 41–81 (AIRLCGPEGDGYCLHGDCIHARDIDGMYCRCSHGYTGIRCQ). 3 cysteine pairs are disulfide-bonded: cysteine 45-cysteine 58, cysteine 53-cysteine 69, and cysteine 71-cysteine 80. Asparagine 95 is a glycosylation site (N-linked (GlcNAc...) asparagine; by host). Residues 101–121 (IPSPGIMLVLVGIIIIITCCL) traverse the membrane as a helical segment. Residues 122–142 (LSVYRFTRRTNKLPLQDMVVP) are Cytoplasmic-facing.

The protein belongs to the orthopoxvirus OPG019 family. Vaccinia growth factor interacts with host EGFR and promotes EGFR dimerization.

The protein localises to the host membrane. It localises to the secreted. Functionally, stimulates cellular proliferation (hyperplasia)and mobility around infected cells to promote rapid and efficient spread of infection. This effect is beneficial for virus replication in vivo, because poxviruses replicate possibly better in proliferating cells than in quiescent cells. Acts by binding host EGFR, inducing its dimerization, autophosphorylation and leading to activation of several cellular pathways regulating cell proliferation or cell survival. The activation by host EGFR of mitogen activated protein kinases (MAPK) and extracellular-signal regulated kinases (ERK) are essential for the positive effect of vaccinia growth factor on poxvirus virulence in vivo. This is Pro-vaccinia growth factor (OPG019) from Vaccinia virus (strain Copenhagen) (VACV).